A 512-amino-acid polypeptide reads, in one-letter code: Keratin, type I cytoskeletal 24 (512 aa).

Residues M1–G21 are disordered. Positions M1 to S140 are head. Positions G8–G21 are enriched in low complexity. Residues E141 to W176 are coil 1A. Positions E141 to C455 constitute an IF rod domain. The linker 1 stretch occupies residues Y177–I197. The coil 1B stretch occupies residues I198–M289. The segment at Q290 to L312 is linker 12. The coil 2 stretch occupies residues L313–D451. The segment at G452–K512 is tail.

Belongs to the intermediate filament family. In terms of assembly, heterotetramer of two type I and two type II keratins.

The sequence is that of Keratin, type I cytoskeletal 24 (Krt24) from Mus musculus (Mouse).